The chain runs to 380 residues: Carbamoyl phosphate synthase small chain (380 aa).

Residues 1-184 (MTTSTRGAHR…EAYVVPAIGE (184 aa)) form a CPSase region. Residues S55, G236, and G238 each contribute to the L-glutamine site. One can recognise a Glutamine amidotransferase type-1 domain in the interval 188–380 (TVAAVDLGIK…FVNLMEGQRA (193 aa)). C264 functions as the Nucleophile in the catalytic mechanism. L-glutamine contacts are provided by F265, Q268, N306, G308, and F309. Residues H354 and E356 contribute to the active site.

It belongs to the CarA family. As to quaternary structure, composed of two chains; the small (or glutamine) chain promotes the hydrolysis of glutamine to ammonia, which is used by the large (or ammonia) chain to synthesize carbamoyl phosphate. Tetramer of heterodimers (alpha,beta)4.

The catalysed reaction is hydrogencarbonate + L-glutamine + 2 ATP + H2O = carbamoyl phosphate + L-glutamate + 2 ADP + phosphate + 2 H(+). The enzyme catalyses L-glutamine + H2O = L-glutamate + NH4(+). The protein operates within amino-acid biosynthesis; L-arginine biosynthesis; carbamoyl phosphate from bicarbonate: step 1/1. It functions in the pathway pyrimidine metabolism; UMP biosynthesis via de novo pathway; (S)-dihydroorotate from bicarbonate: step 1/3. Its function is as follows. Small subunit of the glutamine-dependent carbamoyl phosphate synthetase (CPSase). CPSase catalyzes the formation of carbamoyl phosphate from the ammonia moiety of glutamine, carbonate, and phosphate donated by ATP, constituting the first step of 2 biosynthetic pathways, one leading to arginine and/or urea and the other to pyrimidine nucleotides. The small subunit (glutamine amidotransferase) binds and cleaves glutamine to supply the large subunit with the substrate ammonia. The polypeptide is Carbamoyl phosphate synthase small chain (Streptomyces coelicolor (strain ATCC BAA-471 / A3(2) / M145)).